The sequence spans 171 residues: Translationally-controlled tumor protein homolog (171 aa).

One can recognise a TCTP domain in the interval 1 to 171; it reads MIIYKDIITG…FKDGLEIEKC (171 aa).

Belongs to the TCTP family.

The protein localises to the cytoplasm. In terms of biological role, involved in calcium binding and microtubule stabilization. The protein is Translationally-controlled tumor protein homolog (tpt1) of Danio rerio (Zebrafish).